The following is a 79-amino-acid chain: Kunitz-type serine protease inhibitor homolog dendrotoxin K (79 aa).

The BPTI/Kunitz inhibitor domain occupies 27–77 (CKLPLRIGPCKRKIPSFYYKWKAKQCLPFDYSGCGGNANRFKTIEECRRTC). Cystine bridges form between cysteine 27-cysteine 77, cysteine 36-cysteine 60, and cysteine 52-cysteine 73.

This sequence belongs to the venom Kunitz-type family. As to expression, expressed by the venom gland.

Its subcellular location is the secreted. Serine protease inhibitor homolog that selectively blocks voltage-gated potassium channels homooligomer Kv1.1/KCNA1 (EC(50)=0.6 nM) and Kv1.1-containing heterooligomer. This chain is Kunitz-type serine protease inhibitor homolog dendrotoxin K, found in Dendroaspis polylepis polylepis (Black mamba).